Here is a 113-residue protein sequence, read N- to C-terminus: Defense protein 2 (113 aa).

Belongs to the attacin/sarcotoxin-2 family.

It is found in the secreted. Its function is as follows. Has antibacterial activity against both Gram-positive and Gram-negative bacteria. The chain is Defense protein 2 from Lonomia obliqua (Moth).